We begin with the raw amino-acid sequence, 722 residues long: Putative tyrosine-protein kinase in cps region (722 aa).

The next 2 membrane-spanning stretches (helical) occupy residues isoleucine 31–isoleucine 53 and isoleucine 427–leucine 449.

This sequence belongs to the etk/wzc family. In terms of processing, autophosphorylated on tyrosine residue(s).

The protein resides in the cell inner membrane. It carries out the reaction L-tyrosyl-[protein] + ATP = O-phospho-L-tyrosyl-[protein] + ADP + H(+). It participates in glycan metabolism; exopolysaccharide biosynthesis. This chain is Putative tyrosine-protein kinase in cps region, found in Klebsiella pneumoniae.